The chain runs to 174 residues: Crossover junction endodeoxyribonuclease RuvC (174 aa).

Active-site residues include Asp-8, Glu-69, and Asp-141. Mg(2+) contacts are provided by Asp-8, Glu-69, and Asp-141.

It belongs to the RuvC family. As to quaternary structure, homodimer which binds Holliday junction (HJ) DNA. The HJ becomes 2-fold symmetrical on binding to RuvC with unstacked arms; it has a different conformation from HJ DNA in complex with RuvA. In the full resolvosome a probable DNA-RuvA(4)-RuvB(12)-RuvC(2) complex forms which resolves the HJ. Requires Mg(2+) as cofactor.

It localises to the cytoplasm. The catalysed reaction is Endonucleolytic cleavage at a junction such as a reciprocal single-stranded crossover between two homologous DNA duplexes (Holliday junction).. Functionally, the RuvA-RuvB-RuvC complex processes Holliday junction (HJ) DNA during genetic recombination and DNA repair. Endonuclease that resolves HJ intermediates. Cleaves cruciform DNA by making single-stranded nicks across the HJ at symmetrical positions within the homologous arms, yielding a 5'-phosphate and a 3'-hydroxyl group; requires a central core of homology in the junction. The consensus cleavage sequence is 5'-(A/T)TT(C/G)-3'. Cleavage occurs on the 3'-side of the TT dinucleotide at the point of strand exchange. HJ branch migration catalyzed by RuvA-RuvB allows RuvC to scan DNA until it finds its consensus sequence, where it cleaves and resolves the cruciform DNA. The polypeptide is Crossover junction endodeoxyribonuclease RuvC (Xanthomonas oryzae pv. oryzae (strain MAFF 311018)).